A 394-amino-acid chain; its full sequence is Chorismate synthase (394 aa).

NADP(+) is bound by residues Arg-40 and Arg-46. Residues 135–137 (RAS), 255–256 (QA), Gly-302, 317–321 (KPISS), and Arg-343 contribute to the FMN site.

Belongs to the chorismate synthase family. In terms of assembly, homotetramer. Requires FMNH2 as cofactor.

The enzyme catalyses 5-O-(1-carboxyvinyl)-3-phosphoshikimate = chorismate + phosphate. It participates in metabolic intermediate biosynthesis; chorismate biosynthesis; chorismate from D-erythrose 4-phosphate and phosphoenolpyruvate: step 7/7. Catalyzes the anti-1,4-elimination of the C-3 phosphate and the C-6 proR hydrogen from 5-enolpyruvylshikimate-3-phosphate (EPSP) to yield chorismate, which is the branch point compound that serves as the starting substrate for the three terminal pathways of aromatic amino acid biosynthesis. This reaction introduces a second double bond into the aromatic ring system. This Parafrankia sp. (strain EAN1pec) protein is Chorismate synthase.